Here is a 226-residue protein sequence, read N- to C-terminus: 1-hydroxy-2-glutathionyl-2-methyl-3-butene dehydrogenase (226 aa).

Belongs to the short-chain dehydrogenases/reductases (SDR) family.

The enzyme catalyses 2-glutathionyl-2-methylbut-3-en-1-ol + 2 NAD(+) + H2O = 2-glutathionyl-2-methylbut-3-enoate + 2 NADH + 3 H(+). The catalysed reaction is 2-glutathionyl-2-methylbut-3-en-1-ol + NAD(+) = 2-glutathionyl-2-methylbut-3-enal + NADH + H(+). It carries out the reaction 2-glutathionyl-2-methylbut-3-enal + NAD(+) + H2O = 2-glutathionyl-2-methylbut-3-enoate + NADH + 2 H(+). Involved in isoprene degradation. Catalyzes the two-step NAD(+)-dependent oxidation of 2-glutathionyl-2-methylbut-3-en-1-ol (HGMB) to 2-glutathionyl-2-methylbut-3-enoate (GMBA). The sequence is that of 1-hydroxy-2-glutathionyl-2-methyl-3-butene dehydrogenase from Rhodococcus sp. (strain AD45).